The following is a 406-amino-acid chain: MANVLDELLDRGYIKQFTHEEETRKLLENEKVTFYIGFDPTADSLHVGHFIAMMFMAHMQRAGHRPIALLGGGTAMVGDPSGKTDMRKMLTKEQIQHNVDSIKKQMERFIDFSDDKALIVNNADWLLDLNYVDFLREVGVHFSVNRMLSAECFKQRLEKGLSFLEFNYMLMQGYDFYVLNQKYGCKMELGGDDQWSNMIAGVELVRRKAQGDAMAMTCTLLTNSQGQKMGKTVGGALWLDADKVSPFDFYQYWRNVDDADVEKCLALLTFLPMDEVRRLGALEGAEINGAKKILAYEVTKLVHGDEEAKKAEEAANALFSGGADMSNVPTVIISKEDLGSTVLDVIAKVKIVPSKKEGRRLIEQGGLSINGEKITELTRTLNDDDFKDGSALIKRGKKNYNKIEIQ.

Tyr35 lines the L-tyrosine pocket. A 'HIGH' region motif is present at residues 40–49 (PTADSLHVGH). L-tyrosine contacts are provided by Tyr168 and Gln172. The short motif at 228–232 (KMGKT) is the 'KMSKS' region element. Lys231 contributes to the ATP binding site. The S4 RNA-binding domain maps to 340–405 (STVLDVIAKV…GKKNYNKIEI (66 aa)).

It belongs to the class-I aminoacyl-tRNA synthetase family. TyrS type 1 subfamily. Homodimer.

It is found in the cytoplasm. It carries out the reaction tRNA(Tyr) + L-tyrosine + ATP = L-tyrosyl-tRNA(Tyr) + AMP + diphosphate + H(+). In terms of biological role, catalyzes the attachment of tyrosine to tRNA(Tyr) in a two-step reaction: tyrosine is first activated by ATP to form Tyr-AMP and then transferred to the acceptor end of tRNA(Tyr). The sequence is that of Tyrosine--tRNA ligase from Clostridium botulinum (strain Eklund 17B / Type B).